The sequence spans 189 residues: MINTQDSSILPLSNCPQLQCCRHIVPGPLWCSDAPHPLSKIPGGRGGGRDPSLSALIYKDEKLTVTQDLPVNDGKPHIVHFQYEVTEVKVSSWDAVLSSQSLFVEIPDGLLADGSKEGLLALLEFAEEKMKVNYVFICFRKGREDRAPLLKTFSFLGFEIVRPGHPCVPSRPDVMFMVYPLDQNLSDED.

At Ser-186 the chain carries Phosphoserine.

This sequence belongs to the ODC antizyme family. Interacts with ODC1 and thereby sterically blocks ODC homodimerization. Interacts with AZIN2; this interaction disrupts the interaction between the antizyme and ODC1.

The protein resides in the nucleus. In terms of biological role, ornithine decarboxylase (ODC) antizyme protein that negatively regulates ODC activity and intracellular polyamine biosynthesis and uptake in response to increased intracellular polyamine levels. Binds to ODC monomers, inhibiting the assembly of the functional ODC homodimers. Does not target the ODC monomers for degradation, which allows a protein synthesis-independent restoration of ODC activity. Involved in the translocation of AZIN2 from ER-Golgi intermediate compartment (ERGIC) to the cytosol. The chain is Ornithine decarboxylase antizyme 2 (OAZ2) from Homo sapiens (Human).